We begin with the raw amino-acid sequence, 215 residues long: Cytochrome b6 (215 aa).

The chain crosses the membrane as a helical span at residues 32-52 (IFYCLGGITLTCFLVQVATGF). Residue Cys-35 coordinates heme c. The heme b site is built by His-86 and His-100. Helical transmembrane passes span 90–110 (ASMM…TGGF), 116–136 (LTWV…VTGY), and 186–206 (LHTF…FLMI). Positions 187 and 202 each coordinate heme b.

This sequence belongs to the cytochrome b family. PetB subfamily. As to quaternary structure, the 4 large subunits of the cytochrome b6-f complex are cytochrome b6, subunit IV (17 kDa polypeptide, PetD), cytochrome f and the Rieske protein, while the 4 small subunits are PetG, PetL, PetM and PetN. The complex functions as a dimer. Heme b serves as cofactor. Requires heme c as cofactor.

The protein localises to the plastid. It is found in the chloroplast thylakoid membrane. In terms of biological role, component of the cytochrome b6-f complex, which mediates electron transfer between photosystem II (PSII) and photosystem I (PSI), cyclic electron flow around PSI, and state transitions. This Welwitschia mirabilis (Tree tumbo) protein is Cytochrome b6.